Here is a 510-residue protein sequence, read N- to C-terminus: uncharacterized protein (510 aa).

The protein to B.subtilis SpoVR.

This is an uncharacterized protein from Escherichia coli (strain K12).